The chain runs to 210 residues: MTNWNYQLTHFVTSAPDIRHLPADTGIEVAFAGRSNAGKSSALNTLTNQKNLARTSKTPGRTQLINLFEVAEGKRLVDLPGYGYAQVPEEMKIKWQRALGEYLEKRLCLKGLVVLMDIRHPLKDLDQQMIEWAVESDIQVLVLLTKADKLASGARKAQVNMVREAVLAFNGDVQVEPFSSLKKSGVDKLRQKLDSWFNEIPPQEAVEDAE.

An EngB-type G domain is found at 25–199; sequence TGIEVAFAGR…RQKLDSWFNE (175 aa). GTP is bound by residues 33 to 40, 60 to 64, 78 to 81, 145 to 148, and 178 to 180; these read GRSNAGKS, GRTQL, DLPG, TKAD, and FSS. Ser40 and Thr62 together coordinate Mg(2+).

Belongs to the TRAFAC class TrmE-Era-EngA-EngB-Septin-like GTPase superfamily. EngB GTPase family. Mg(2+) serves as cofactor.

Its function is as follows. Necessary for normal cell division and for the maintenance of normal septation. This is Probable GTP-binding protein EngB from Klebsiella pneumoniae subsp. pneumoniae (strain ATCC 700721 / MGH 78578).